The sequence spans 276 residues: Rhomboid protease GlpG (276 aa).

The next 6 helical transmembrane spans lie at 94 to 114 (GPVTWVMMIACVVVFIAMQIL), 142 to 162 (ALMHFSLMHILFNLLWWWYLG), 169 to 189 (LGSGKLIVITLISALLSGYVQ), 192 to 212 (FSGPWFGGLSGVVYALMGYVW), 229 to 249 (LIIFALIWIVAGWFDLFGMSM), and 250 to 270 (ANGAHIAGLAVGLAMAFVDSL). The active-site Nucleophile is S201. H254 is a catalytic residue.

Belongs to the peptidase S54 family.

It is found in the cell inner membrane. The enzyme catalyses Cleaves type-1 transmembrane domains using a catalytic dyad composed of serine and histidine that are contributed by different transmembrane domains.. In terms of biological role, rhomboid-type serine protease that catalyzes intramembrane proteolysis. This is Rhomboid protease GlpG from Escherichia fergusonii (strain ATCC 35469 / DSM 13698 / CCUG 18766 / IAM 14443 / JCM 21226 / LMG 7866 / NBRC 102419 / NCTC 12128 / CDC 0568-73).